A 434-amino-acid polypeptide reads, in one-letter code: RNA-binding protein SRO9 (434 aa).

Residues 1–13 (MSAETAAANTATA) are compositionally biased toward low complexity. The segment at 1–243 (MSAETAAANT…FHHNQQHPQQ (243 aa)) is disordered. Residues 26–41 (SKQVNLTPAPLPTSSP) show a composition bias toward polar residues. A Phosphoserine modification is found at S55. Low complexity predominate over residues 93–124 (KRSGSKNGASNGNSNKSKNNKTAASSTSSSNA). Residues 125-140 (NRKKKHHQHNAKKQQQ) show a composition bias toward basic residues. S148 bears the Phosphoserine mark. Residue K156 forms a Glycyl lysine isopeptide (Lys-Gly) (interchain with G-Cter in ubiquitin) linkage. Residues 158–167 (ATSQENGQST) are compositionally biased toward polar residues. Basic residues predominate over residues 173 to 195 (PHHRNHHHSHHHNSNGPQRRKFH). Over residues 196 to 208 (NSNNAGMPQNQGF) the composition is skewed to polar residues. Positions 218–227 (RNARNNNNNR) are enriched in low complexity. Basic residues predominate over residues 228-238 (SKYHNHFHHNQ). The region spanning 255–351 (VQPVLMAINN…KEGDNVTGEA (97 aa)) is the HTH La-type RNA-binding domain. Glycyl lysine isopeptide (Lys-Gly) (interchain with G-Cter in ubiquitin) cross-links involve residues K301, K342, and K352. The segment at 396 to 434 (SLPPVPQQEEESSTELASQEQETKEDSAPVAAGESESSL) is disordered. S422 carries the phosphoserine modification.

Interacts with HAP1. Component of the HMC including HAP1, SRO9 and YDJ1.

The protein resides in the cytoplasm. In terms of biological role, may overlap in function with tropomyosin and may be involved in organization of actin filaments. Acts as a multicopy suppressor of RHO3 mutation. RNA-binding protein which may modulate mRNA translation. Involved in heme regulation of HAP1, as a component of the high-molecular-weight complex (HMC). The sequence is that of RNA-binding protein SRO9 (SRO9) from Saccharomyces cerevisiae (strain ATCC 204508 / S288c) (Baker's yeast).